Here is a 336-residue protein sequence, read N- to C-terminus: Protein-glutamate methylesterase/protein-glutamine glutaminase 1 (336 aa).

A Response regulatory domain is found at 2–119 (KIAIVNDMPM…GNAQEAAAPL (118 aa)). Aspartate 53 bears the 4-aspartylphosphate mark. A CheB-type methylesterase domain is found at 143-336 (PLRSGAPRQS…APRLLEIFAK (194 aa)). Residues serine 159, histidine 186, and aspartate 279 contribute to the active site.

The protein belongs to the CheB family. Post-translationally, phosphorylated by CheA. Phosphorylation of the N-terminal regulatory domain activates the methylesterase activity.

It is found in the cytoplasm. It catalyses the reaction [protein]-L-glutamate 5-O-methyl ester + H2O = L-glutamyl-[protein] + methanol + H(+). The enzyme catalyses L-glutaminyl-[protein] + H2O = L-glutamyl-[protein] + NH4(+). Involved in chemotaxis. Part of a chemotaxis signal transduction system that modulates chemotaxis in response to various stimuli. Catalyzes the demethylation of specific methylglutamate residues introduced into the chemoreceptors (methyl-accepting chemotaxis proteins or MCP) by CheR. Also mediates the irreversible deamidation of specific glutamine residues to glutamic acid. This chain is Protein-glutamate methylesterase/protein-glutamine glutaminase 1, found in Pseudomonas fluorescens (strain ATCC BAA-477 / NRRL B-23932 / Pf-5).